Here is a 196-residue protein sequence, read N- to C-terminus: uncharacterized protein (196 aa).

The chain crosses the membrane as a helical span at residues G20 to V40.

The protein resides in the membrane. This is an uncharacterized protein from Mycobacterium tuberculosis (strain CDC 1551 / Oshkosh).